A 211-amino-acid chain; its full sequence is Transcription antitermination protein NusB (211 aa).

Belongs to the NusB family.

Its function is as follows. Involved in transcription antitermination. Required for transcription of ribosomal RNA (rRNA) genes. Binds specifically to the boxA antiterminator sequence of the ribosomal RNA (rrn) operons. In Gloeobacter violaceus (strain ATCC 29082 / PCC 7421), this protein is Transcription antitermination protein NusB.